Reading from the N-terminus, the 203-residue chain is Casparian strip membrane protein 1 (203 aa).

The residue at position 2 (Ala-2) is an N-acetylalanine. The Cytoplasmic segment spans residues 2–40 (AKESTTIDVGEPSTVTKSSSHVVKKKGFVAAAAGGGAKR). The helical transmembrane segment at 41-61 (GLAIFDFLLRLAAIGVTIGAA) threads the bilayer. Residues 62–92 (SVMYTAQETLPFFTQFLQFQAGYDDLPAFQY) are Extracellular-facing. A helical membrane pass occupies residues 93 to 113 (FVIAVAIVASYLVLSLPFSIV). The Cytoplasmic portion of the chain corresponds to 114 to 124 (TIVRPLAVAPR). The helical transmembrane segment at 125-145 (LILLIFDTLVVTLNTSAAAAA) threads the bilayer. Residues 146-177 (ASIVYLAHNGNQSTNWLPICQQFGDFCQNVST) lie on the Extracellular side of the membrane. Asn-156 and Asn-174 each carry an N-linked (GlcNAc...) asparagine glycan. Residues 178–198 (AVVAASIAILFFIVLIIISAI) traverse the membrane as a helical segment. Topologically, residues 199–203 (ALKRH) are cytoplasmic.

This sequence belongs to the Casparian strip membrane proteins (CASP) family. As to quaternary structure, homodimer and heterodimers.

Its subcellular location is the cell membrane. In terms of biological role, regulates membrane-cell wall junctions and localized cell wall deposition. Required for establishment of the Casparian strip membrane domain (CSD) and the subsequent formation of Casparian strips, a cell wall modification of the root endodermis that determines an apoplastic barrier between the intraorganismal apoplasm and the extraorganismal apoplasm and prevents lateral diffusion. This is Casparian strip membrane protein 1 from Arabidopsis lyrata subsp. lyrata (Lyre-leaved rock-cress).